The primary structure comprises 173 residues: Lens fiber membrane intrinsic protein (173 aa).

At 1 to 3 the chain is on the cytoplasmic side; that stretch reads MYS. The chain crosses the membrane as a helical span at residues 4–24; sequence FMGGGLFCAWVGTILLVVATA. Topologically, residues 25–66 are extracellular; that stretch reads TDHWMQYRLSGAFAHQGLWRYCLGTKCYLQTESIAYWNATRA. 2 C-linked (Man) tryptophan; partial glycosylation sites follow: Trp-43 and Trp-61. The helical transmembrane segment at 67-87 threads the bilayer; that stretch reads FMILSSLCATSGIIMGIVAFA. At 88–98 the chain is on the cytoplasmic side; it reads QQPTFTRLSRP. Residues 99 to 119 form a helical membrane-spanning segment; that stretch reads FSAGIMFFASTFFVLLALAIY. Residues 120 to 140 lie on the Extracellular side of the membrane; the sequence is TGVTVSFLGRRFGDWRFSWSY. Residues 141-161 traverse the membrane as a helical segment; the sequence is ILGWVALLMTFFAGIFYMCAY. The Cytoplasmic portion of the chain corresponds to 162-173; it reads RMHECRRLSTPR. A Phosphoserine modification is found at Ser-170. Phosphothreonine is present on Thr-171.

The protein belongs to the PMP-22/EMP/MP20 family. As to quaternary structure, seems to be associated with itself or another lens membrane component via disulfide bonds. Post-translationally, predominantly monophosphorylated on Ser-170. Only about 15% diphosphorylated on both Ser-170 and Thr-171. C-glycosylated. Trp-43 is more extensively C-glycosylated than Trp-61. C-glycosylation may be involved in membrane trafficking. As to expression, eye lens specific.

It localises to the membrane. Present in the thicker 16-17 nm junctions of mammalian lens fiber cells, where it may contribute to cell junctional organization. Acts as a receptor for calmodulin. May play an important role in both lens development and cataractogenesis. The protein is Lens fiber membrane intrinsic protein (LIM2) of Bos taurus (Bovine).